Consider the following 467-residue polypeptide: FK506-binding protein 4 (467 aa).

Disordered regions lie at residues 64 to 163 (KATG…GDDD) and 208 to 357 (GNFV…KPTS). 3 stretches are compositionally biased toward acidic residues: residues 71-80 (DDDDEEEDEY), 147-163 (SDEE…GDDD), and 213-254 (PEDD…DELD). Basic and acidic residues-rich tracts occupy residues 271 to 287 (APKL…RPAE) and 312 to 332 (QKVE…DKKV). The PPIase FKBP-type domain maps to 381 to 467 (GDRVGMRYIG…IFDVKLLEIK (87 aa)).

The protein belongs to the FKBP-type PPIase family. FKBP3/4 subfamily. Binds to histones H3 and H4.

Its subcellular location is the nucleus. The enzyme catalyses [protein]-peptidylproline (omega=180) = [protein]-peptidylproline (omega=0). With respect to regulation, inhibited by both FK506 and rapamycin. PPIase that acts as a histone chaperone. Histone proline isomerase that increases the rate of cis-trans isomerization at prolines on the histone H3 N-terminal tail. Proline isomerization influences H3 methylation thereby regulating gene expression. The protein is FK506-binding protein 4 (fkr-4) of Neurospora crassa (strain ATCC 24698 / 74-OR23-1A / CBS 708.71 / DSM 1257 / FGSC 987).